A 100-amino-acid chain; its full sequence is Small ribosomal subunit protein uS14 (100 aa).

It belongs to the universal ribosomal protein uS14 family. As to quaternary structure, part of the 30S ribosomal subunit. Contacts proteins S3 and S10.

Functionally, binds 16S rRNA, required for the assembly of 30S particles and may also be responsible for determining the conformation of the 16S rRNA at the A site. This is Small ribosomal subunit protein uS14 from Synechococcus sp. (strain CC9605).